The sequence spans 556 residues: Genetic interactor of prohibitins 3, mitochondrial (556 aa).

The N-terminal 21 residues, 1-21, are a transit peptide targeting the mitochondrion; sequence MLNLCHALRGVRQFSCSVIVK. Positions 113–305 constitute a CP-type G domain; it reads ESTLNDILNY…LFDLPGYSTS (193 aa).

It belongs to the TRAFAC class YlqF/YawG GTPase family. GEP3 subfamily.

The protein resides in the mitochondrion. In terms of biological role, interacts genetically with prohibitins and thus may be involved in the mitochondrial lipid metabolism. The polypeptide is Genetic interactor of prohibitins 3, mitochondrial (GEP3) (Saccharomyces cerevisiae (strain Zymaflore VL3) (Baker's yeast)).